A 210-amino-acid chain; its full sequence is DNA-directed RNA polymerases I, II, and III subunit RPABC1 (210 aa).

Methionine 1 carries the post-translational modification N-acetylmethionine. Lysine 81 is covalently cross-linked (Glycyl lysine isopeptide (Lys-Gly) (interchain with G-Cter in SUMO2)).

Belongs to the archaeal Rpo5/eukaryotic RPB5 RNA polymerase subunit family. As to quaternary structure, component of the RNA polymerase I (Pol I), RNA polymerase II (Pol II) and RNA polymerase III (Pol III) complexes consisting of at least 13, 12 and 17 subunits, respectively. Pol I complex consists of a ten-subunit catalytic core composed of POLR1A/RPA1, POLR1B/RPA2, POLR1C/RPAC1, POLR1D/RPAC2, POLR1H/RPA12, POLR2E/RPABC1, POLR2F/RPABC2, POLR2H/RPABC3, POLR2K/RPABC4 and POLR2L/RPABC5; a mobile stalk subunit POLR1F/RPA43 protruding from the core and additional subunits homologous to general transcription factors POLR1E/RPA49 and POLR1G/RPA34. Part of Pol I pre-initiation complex (PIC), in which Pol I core assembles with RRN3 and promoter-bound UTBF and SL1/TIF-IB complex. Pol II complex contains a ten-subunit catalytic core composed of POLR2A/RPB1, POLR2B/RPB2, POLR2C/RPB3, POLR2I/RPB9, POLR2J/RPB11, POLR2E/RPABC1, POLR2F/RPABC2, POLR2H/RPABC3, POLR2K/RPABC4 and POLR2L/RPABC5 and a mobile stalk composed of two subunits POLR2D/RPB4 and POLR2G/RPB7. Part of Pol II(G) complex, in which Pol II core associates with an additional subunit POLR2M; unlike conventional Pol II, Pol II(G) functions as a transcriptional repressor. Part of TBP-based Pol II pre-initiation complex (PIC), in which Pol II core assembles with general transcription factors and other specific initiation factors including GTF2E1, GTF2E2, GTF2F1, GTF2F2, TCEA1, ERCC2, ERCC3, GTF2H2, GTF2H3, GTF2H4, GTF2H5, GTF2A1, GTF2A2, GTF2B and TBP; this large multi-subunit PIC complex mediates DNA unwinding and targets Pol II core to the transcription start site where the first phosphodiester bond forms. In Pol II complex, this subunit is present in 2-fold molar excess over the other subunits. Pol III complex consists of a ten-subunit catalytic core composed of POLR3A/RPC1, POLR3B/RPC2, POLR1C/RPAC1, POLR1D/RPAC2, POLR3K/RPC10, POLR2E/RPABC1, POLR2F/RPABC2, POLR2H/RPABC3, POLR2K/RPABC4 and POLR2L/RPABC5; a mobile stalk composed of two subunits POLR3H/RPC8 and CRCP/RPC9, protruding from the core and functioning primarily in transcription initiation; and additional subunits homologous to general transcription factors of the RNA polymerase II machinery, POLR3C/RPC3-POLR3F/RPC6-POLR3G/RPC7 heterotrimer required for transcription initiation and POLR3D/RPC4-POLR3E/RPC5 heterodimer involved in both transcription initiation and termination. Component of the PAQosome complex which is responsible for the biogenesis of several protein complexes and which consists of R2TP complex members RUVBL1, RUVBL2, RPAP3 and PIH1D1, URI complex members PFDN2, PFDN6, PDRG1, UXT and URI1 as well as ASDURF, POLR2E and DNAAF10/WDR92. Interacts with URI1. In terms of assembly, (Microbial infection) Interacts with HBV protein X.

The protein localises to the nucleus. The protein resides in the nucleolus. DNA-dependent RNA polymerase catalyzes the transcription of DNA into RNA using the four ribonucleoside triphosphates as substrates. Common component of RNA polymerases I, II and III which synthesize ribosomal RNA precursors, mRNA precursors and many functional non-coding RNAs, and small RNAs, such as 5S rRNA and tRNAs, respectively. Pol II is the central component of the basal RNA polymerase II transcription machinery. Pols are composed of mobile elements that move relative to each other. In Pol II, POLR2E/RPABC1 is part of the lower jaw surrounding the central large cleft and thought to grab the incoming DNA template. The sequence is that of DNA-directed RNA polymerases I, II, and III subunit RPABC1 from Homo sapiens (Human).